The primary structure comprises 62 residues: Chymotrypsin inhibitor SCI-I (62 aa).

One can recognise a BPTI/Kunitz inhibitor domain in the interval Cys9–Cys60. 3 disulfide bridges follow: Cys9–Cys60, Cys19–Cys43, and Cys35–Cys56.

Functionally, inhibits chymotrypsin and thus avoids the accidental chymotrypsin-mediated activation of prophenoloxidase. This enzyme is required by the insect immune system to produce melanin which is used to engulf foreign objects. This is Chymotrypsin inhibitor SCI-I from Bombyx mori (Silk moth).